A 216-amino-acid chain; its full sequence is MEEIRFCPEHGFYRGEKCRCGAEGELILPKEKVEKLGKFISGVLRHFPDKFGLNMDENGWVNLESLARVVKRRYKWANIWLIKALVYSDEKQRYELKGDKIRARYGHSIDVKLSDFPEAKEDVLYYGTSEEEAHRMLEIGIKPVNQRYVHLSTTIEKSKEVASIRTDTPIVLEIDAKKAREDGIRIIKANDLIALAEEIPAKYIKRQIVFNQYSSS.

Belongs to the KptA/TPT1 family.

Functionally, removes the 2'-phosphate from RNA via an intermediate in which the phosphate is ADP-ribosylated by NAD followed by a presumed transesterification to release the RNA and generate ADP-ribose 1''-2''-cyclic phosphate (APPR&gt;P). May function as an ADP-ribosylase. This is Probable RNA 2'-phosphotransferase 1 (kptA1) from Archaeoglobus fulgidus (strain ATCC 49558 / DSM 4304 / JCM 9628 / NBRC 100126 / VC-16).